Reading from the N-terminus, the 314-residue chain is Deacetoxycephalosporin C synthase (314 aa).

Positions Asp156–Pro269 constitute a Fe2OG dioxygenase domain.

The protein belongs to the iron/ascorbate-dependent oxidoreductase family. Requires Fe cation as cofactor. The cofactor is L-ascorbate.

It catalyses the reaction penicillin N + 2-oxoglutarate + O2 = deacetoxycephalosporin C + succinate + CO2 + H2O. The protein operates within antibiotic biosynthesis; cephalosporin C biosynthesis. Catalyzes the step from penicillin N to deacetoxy-cephalosporin C. The chain is Deacetoxycephalosporin C synthase (cefE) from Amycolatopsis lactamdurans (Nocardia lactamdurans).